The primary structure comprises 715 residues: Transcription activator of gluconeogenesis MGYG_02011 (715 aa).

The span at 1–14 (MSPHQTTGQESDNM) shows a compositional bias: polar residues. A disordered region spans residues 1 to 28 (MSPHQTTGQESDNMAVNGENAPASSQYI). Residues 66–94 (CYACQRGHLTCGDERPCQRCIKRGFQDAC) constitute a DNA-binding region (zn(2)-C6 fungal-type). Polar residues-rich tracts occupy residues 129-166 (QNNV…PQNK), 179-191 (YASQ…TYQI), 203-223 (SLPQ…GQFN), and 362-385 (MMTT…RPNA). 4 disordered regions span residues 129–223 (QNNV…GQFN), 354–414 (SPAS…RRRH), 534–569 (NHNV…NSST), and 628–663 (GSNG…NGRG). A compositionally biased stretch (low complexity) spans 386–400 (SVSQQRQQPVVSTPQ). Polar residues-rich tracts occupy residues 535 to 554 (HNVN…SRGS) and 639 to 649 (GEASSSEANEL). Residues 650–662 (NGSNANGATTNGR) are compositionally biased toward low complexity.

This sequence belongs to the ERT1/acuK family.

Its subcellular location is the nucleus. Its function is as follows. Transcription factor which regulates nonfermentable carbon utilization. Activator of gluconeogenetic genes. This Arthroderma gypseum (strain ATCC MYA-4604 / CBS 118893) (Microsporum gypseum) protein is Transcription activator of gluconeogenesis MGYG_02011.